The following is a 240-amino-acid chain: MGQKIHPVGFRLGITKDHKSCWYADPKRYPELLQEDHKIRQYIEKTLNNAGISDIRIERKAEQIELGIHTARPGVVVGRGGSGIEQLREGLQKLLGSARQIRVNVIEVPNADADAALMAEYIGQQLERRVSFRRVVRQALQRAERAEVKGIKIQVSGRLNGAEIARTEWVREGRVPLHTLRADIDYAYRTALTTYGILGIKVWIFKGEVIPGQEAAIVAPPSQPRRKSRRQQFDDRSQDG.

The 71-residue stretch at 39–109 (IRQYIEKTLN…QIRVNVIEVP (71 aa)) folds into the KH type-2 domain. Residues 219-240 (APPSQPRRKSRRQQFDDRSQDG) are disordered. Positions 231–240 (QQFDDRSQDG) are enriched in basic and acidic residues.

Belongs to the universal ribosomal protein uS3 family. Part of the 30S ribosomal subunit. Forms a tight complex with proteins S10 and S14.

Binds the lower part of the 30S subunit head. Binds mRNA in the 70S ribosome, positioning it for translation. This Synechocystis sp. (strain ATCC 27184 / PCC 6803 / Kazusa) protein is Small ribosomal subunit protein uS3.